A 337-amino-acid chain; its full sequence is Ketol-acid reductoisomerase (NADP(+)) (337 aa).

Residues 1-183 (MAIETLYDSD…GGARAGVIPT (183 aa)) enclose the KARI N-terminal Rossmann domain. Residues 26-29 (YGSQ), Arg49, Ser52, Ser54, and 84-87 (DTSQ) each bind NADP(+). His109 is an active-site residue. Gly135 is an NADP(+) binding site. The KARI C-terminal knotted domain maps to 184–329 (TFKDETETDL…SQLRDLMSWV (146 aa)). Mg(2+) is bound by residues Asp192, Glu196, Glu228, and Glu232. Ser253 contributes to the substrate binding site.

It belongs to the ketol-acid reductoisomerase family. It depends on Mg(2+) as a cofactor.

The catalysed reaction is (2R)-2,3-dihydroxy-3-methylbutanoate + NADP(+) = (2S)-2-acetolactate + NADPH + H(+). It catalyses the reaction (2R,3R)-2,3-dihydroxy-3-methylpentanoate + NADP(+) = (S)-2-ethyl-2-hydroxy-3-oxobutanoate + NADPH + H(+). The protein operates within amino-acid biosynthesis; L-isoleucine biosynthesis; L-isoleucine from 2-oxobutanoate: step 2/4. It functions in the pathway amino-acid biosynthesis; L-valine biosynthesis; L-valine from pyruvate: step 2/4. Involved in the biosynthesis of branched-chain amino acids (BCAA). Catalyzes an alkyl-migration followed by a ketol-acid reduction of (S)-2-acetolactate (S2AL) to yield (R)-2,3-dihydroxy-isovalerate. In the isomerase reaction, S2AL is rearranged via a Mg-dependent methyl migration to produce 3-hydroxy-3-methyl-2-ketobutyrate (HMKB). In the reductase reaction, this 2-ketoacid undergoes a metal-dependent reduction by NADPH to yield (R)-2,3-dihydroxy-isovalerate. The protein is Ketol-acid reductoisomerase (NADP(+)) of Corynebacterium aurimucosum (strain ATCC 700975 / DSM 44827 / CIP 107346 / CN-1) (Corynebacterium nigricans).